Here is a 176-residue protein sequence, read N- to C-terminus: NAD(P)H-quinone oxidoreductase subunit 6, chloroplastic (176 aa).

5 helical membrane-spanning segments follow: residues 10–30 (FLLVFLELGLILGSLGVVFLP), 33–53 (IYSAFSLGLVLFCISLFYILL), 61–81 (AQLLIYVGAINVLIIFAVMFM), 92–112 (LWTVGDGVTSMVCTSLFISLI), and 153–173 (FLPFELISIILLVALIGAIAI).

It belongs to the complex I subunit 6 family. In terms of assembly, NDH is composed of at least 16 different subunits, 5 of which are encoded in the nucleus.

It is found in the plastid. Its subcellular location is the chloroplast thylakoid membrane. It catalyses the reaction a plastoquinone + NADH + (n+1) H(+)(in) = a plastoquinol + NAD(+) + n H(+)(out). It carries out the reaction a plastoquinone + NADPH + (n+1) H(+)(in) = a plastoquinol + NADP(+) + n H(+)(out). NDH shuttles electrons from NAD(P)H:plastoquinone, via FMN and iron-sulfur (Fe-S) centers, to quinones in the photosynthetic chain and possibly in a chloroplast respiratory chain. The immediate electron acceptor for the enzyme in this species is believed to be plastoquinone. Couples the redox reaction to proton translocation, and thus conserves the redox energy in a proton gradient. In Jasminum nudiflorum (Winter jasmine), this protein is NAD(P)H-quinone oxidoreductase subunit 6, chloroplastic (ndhG).